We begin with the raw amino-acid sequence, 355 residues long: MAVDFSMRQLLEAGAHFGHQAHRWNPKMQPYIFGTRNNIHIIDLAQTVPAMHQALQAVSDTVAKGGRVLFVGTKRQAADTIAEAAKRSAQYYVNSRWLGGMLTNWKTISGSISRLRKVTETLETGGPGLTKKERLMLSREKEKLEKALGGIKDMGGVPDLLFVIDTNKEQLAIKEANRLGIPVAAIVDTNCNPDGISYIVPANDDAGRAIALYCDLIAKAAIDGISRAQGSSGMDLGASEEPMAEELPANDDAAVTVESDALDPADVAMLAESTEHFELLAAPRGAPDDLTKLNGAGPQIVQKLNDAGIYHYWQLAAMTPEDVAKVDADLKLNGRIDRDSWVSQARGFVEAAAAA.

Belongs to the universal ribosomal protein uS2 family.

The sequence is that of Small ribosomal subunit protein uS2 from Methylobacterium radiotolerans (strain ATCC 27329 / DSM 1819 / JCM 2831 / NBRC 15690 / NCIMB 10815 / 0-1).